A 527-amino-acid polypeptide reads, in one-letter code: Abrin-b (527 aa).

The residue at position 1 (Gln-1) is a Pyrrolidone carboxylic acid. N-linked (GlcNAc...) asparagine glycosylation is present at Asn-110. Glu-163 is a catalytic residue. Intrachain disulfides connect Cys-246/Cys-268, Cys-285/Cys-304, and Cys-328/Cys-345. Positions Tyr-272–Gly-399 constitute a Ricin B-type lectin 1 domain. A 1-alpha repeat occupies Asn-282–Ser-324. Residues Asn-325 to Asn-365 form a 1-beta repeat. Asn-360 and Asn-400 each carry an N-linked (GlcNAc...) asparagine glycan. Residues Ser-368 to Asn-400 form a 1-gamma repeat. Residues Thr-402–Leu-526 form the Ricin B-type lectin 2 domain. Residues Ser-413–Ser-448 form a 2-alpha repeat. Disulfide bonds link Cys-416/Cys-429 and Cys-455/Cys-472. The stretch at Thr-452–Asn-491 is one 2-beta repeat. The 2-gamma repeat unit spans residues Asp-494–Phe-527.

This sequence in the N-terminal section; belongs to the ribosome-inactivating protein family. Type 2 RIP subfamily. In terms of assembly, disulfide-linked dimer of A and B chains.

The catalysed reaction is Endohydrolysis of the N-glycosidic bond at one specific adenosine on the 28S rRNA.. Its function is as follows. The A chain is responsible for inhibiting protein synthesis through the catalytic inactivation of 60S ribosomal subunits by removing adenine from position 4,324 of 28S rRNA. Abrin-a is more toxic than ricin. Functionally, the B chain is a galactose-specific lectin that facilitates the binding of abrin to the cell membrane that precedes endocytosis. The sequence is that of Abrin-b from Abrus precatorius (Indian licorice).